A 280-amino-acid chain; its full sequence is Fructose-1,6-bisphosphatase class 1 (280 aa).

The Mg(2+) site is built by Glu64, Asp83, Leu85, and Asp86. Substrate is bound by residues 86-89 (DGSS), Tyr189, and Lys220. Glu226 serves as a coordination point for Mg(2+).

It belongs to the FBPase class 1 family. As to quaternary structure, homotetramer. Requires Mg(2+) as cofactor.

The protein localises to the cytoplasm. It carries out the reaction beta-D-fructose 1,6-bisphosphate + H2O = beta-D-fructose 6-phosphate + phosphate. It functions in the pathway carbohydrate biosynthesis; gluconeogenesis. The polypeptide is Fructose-1,6-bisphosphatase class 1 (Campylobacter jejuni (strain RM1221)).